The sequence spans 232 residues: Phosphoribosylformylglycinamidine synthase subunit PurQ (232 aa).

One can recognise a Glutamine amidotransferase type-1 domain in the interval 2–232 (KIAIIQFGGT…SMADYITENF (231 aa)). Residue Cys86 is the Nucleophile of the active site. Residues His203 and Glu205 contribute to the active site.

As to quaternary structure, part of the FGAM synthase complex composed of 1 PurL, 1 PurQ and 2 PurS subunits.

It localises to the cytoplasm. The catalysed reaction is N(2)-formyl-N(1)-(5-phospho-beta-D-ribosyl)glycinamide + L-glutamine + ATP + H2O = 2-formamido-N(1)-(5-O-phospho-beta-D-ribosyl)acetamidine + L-glutamate + ADP + phosphate + H(+). It carries out the reaction L-glutamine + H2O = L-glutamate + NH4(+). The protein operates within purine metabolism; IMP biosynthesis via de novo pathway; 5-amino-1-(5-phospho-D-ribosyl)imidazole from N(2)-formyl-N(1)-(5-phospho-D-ribosyl)glycinamide: step 1/2. Functionally, part of the phosphoribosylformylglycinamidine synthase complex involved in the purines biosynthetic pathway. Catalyzes the ATP-dependent conversion of formylglycinamide ribonucleotide (FGAR) and glutamine to yield formylglycinamidine ribonucleotide (FGAM) and glutamate. The FGAM synthase complex is composed of three subunits. PurQ produces an ammonia molecule by converting glutamine to glutamate. PurL transfers the ammonia molecule to FGAR to form FGAM in an ATP-dependent manner. PurS interacts with PurQ and PurL and is thought to assist in the transfer of the ammonia molecule from PurQ to PurL. This Methanosarcina mazei (strain ATCC BAA-159 / DSM 3647 / Goe1 / Go1 / JCM 11833 / OCM 88) (Methanosarcina frisia) protein is Phosphoribosylformylglycinamidine synthase subunit PurQ.